Here is a 309-residue protein sequence, read N- to C-terminus: UDP-3-O-acyl-N-acetylglucosamine deacetylase (309 aa).

Zn(2+) contacts are provided by His-78, His-237, and Asp-241. The active-site Proton donor is the His-264.

The protein belongs to the LpxC family. The cofactor is Zn(2+).

The catalysed reaction is a UDP-3-O-[(3R)-3-hydroxyacyl]-N-acetyl-alpha-D-glucosamine + H2O = a UDP-3-O-[(3R)-3-hydroxyacyl]-alpha-D-glucosamine + acetate. It participates in glycolipid biosynthesis; lipid IV(A) biosynthesis; lipid IV(A) from (3R)-3-hydroxytetradecanoyl-[acyl-carrier-protein] and UDP-N-acetyl-alpha-D-glucosamine: step 2/6. Catalyzes the hydrolysis of UDP-3-O-myristoyl-N-acetylglucosamine to form UDP-3-O-myristoylglucosamine and acetate, the committed step in lipid A biosynthesis. This is UDP-3-O-acyl-N-acetylglucosamine deacetylase from Methylobacillus flagellatus (strain ATCC 51484 / DSM 6875 / VKM B-1610 / KT).